Reading from the N-terminus, the 237-residue chain is Phosphatidylserine decarboxylase proenzyme (237 aa).

Ser206 functions as the Schiff-base intermediate with substrate; via pyruvic acid in the catalytic mechanism. Position 206 is a pyruvic acid (Ser); by autocatalysis (Ser206).

Belongs to the phosphatidylserine decarboxylase family. PSD-A subfamily. As to quaternary structure, heterodimer of a large membrane-associated beta subunit and a small pyruvoyl-containing alpha subunit. Requires pyruvate as cofactor. Post-translationally, is synthesized initially as an inactive proenzyme. Formation of the active enzyme involves a self-maturation process in which the active site pyruvoyl group is generated from an internal serine residue via an autocatalytic post-translational modification. Two non-identical subunits are generated from the proenzyme in this reaction, and the pyruvate is formed at the N-terminus of the alpha chain, which is derived from the carboxyl end of the proenzyme. The post-translation cleavage follows an unusual pathway, termed non-hydrolytic serinolysis, in which the side chain hydroxyl group of the serine supplies its oxygen atom to form the C-terminus of the beta chain, while the remainder of the serine residue undergoes an oxidative deamination to produce ammonia and the pyruvoyl prosthetic group on the alpha chain.

It is found in the cell membrane. The catalysed reaction is a 1,2-diacyl-sn-glycero-3-phospho-L-serine + H(+) = a 1,2-diacyl-sn-glycero-3-phosphoethanolamine + CO2. The protein operates within phospholipid metabolism; phosphatidylethanolamine biosynthesis; phosphatidylethanolamine from CDP-diacylglycerol: step 2/2. Catalyzes the formation of phosphatidylethanolamine (PtdEtn) from phosphatidylserine (PtdSer). This Mycobacteroides abscessus (strain ATCC 19977 / DSM 44196 / CCUG 20993 / CIP 104536 / JCM 13569 / NCTC 13031 / TMC 1543 / L948) (Mycobacterium abscessus) protein is Phosphatidylserine decarboxylase proenzyme.